A 446-amino-acid polypeptide reads, in one-letter code: N-succinylarginine dihydrolase (446 aa).

Substrate is bound by residues 19 to 28 (AGLSFGNVAS), Asn110, and 137 to 138 (HR). Residue Glu174 is part of the active site. Arg213 contacts substrate. Residue His249 is part of the active site. The substrate site is built by Asp251 and Asn364. Cys370 (nucleophile) is an active-site residue.

This sequence belongs to the succinylarginine dihydrolase family. Homodimer.

The catalysed reaction is N(2)-succinyl-L-arginine + 2 H2O + 2 H(+) = N(2)-succinyl-L-ornithine + 2 NH4(+) + CO2. The protein operates within amino-acid degradation; L-arginine degradation via AST pathway; L-glutamate and succinate from L-arginine: step 2/5. In terms of biological role, catalyzes the hydrolysis of N(2)-succinylarginine into N(2)-succinylornithine, ammonia and CO(2). The sequence is that of N-succinylarginine dihydrolase from Burkholderia lata (strain ATCC 17760 / DSM 23089 / LMG 22485 / NCIMB 9086 / R18194 / 383).